We begin with the raw amino-acid sequence, 549 residues long: Thermosome subunit (549 aa).

Positions 528-538 (EKEKEGEKGGG) are enriched in basic and acidic residues. The tract at residues 528 to 549 (EKEKEGEKGGGSEEFSGSSDLD) is disordered. Positions 540–549 (EEFSGSSDLD) are enriched in low complexity.

This sequence belongs to the TCP-1 chaperonin family. In terms of assembly, forms an oligomeric complex of eight-membered rings.

Molecular chaperone; binds unfolded polypeptides in vitro, and has a weak ATPase activity. This chain is Thermosome subunit (ths), found in Pyrococcus horikoshii (strain ATCC 700860 / DSM 12428 / JCM 9974 / NBRC 100139 / OT-3).